Here is a 229-residue protein sequence, read N- to C-terminus: Ribonuclease 3 (229 aa).

Positions 5–127 (LSRLERQLGY…LIGAIYLDAG (123 aa)) constitute an RNase III domain. E40 serves as a coordination point for Mg(2+). Residue D44 is part of the active site. 2 residues coordinate Mg(2+): D113 and E116. The active site involves E116. The region spanning 154-224 (DPKTRLQEFL…AAAALIALGV (71 aa)) is the DRBM domain.

Belongs to the ribonuclease III family. As to quaternary structure, homodimer. It depends on Mg(2+) as a cofactor.

The protein localises to the cytoplasm. It catalyses the reaction Endonucleolytic cleavage to 5'-phosphomonoester.. In terms of biological role, digests double-stranded RNA. Involved in the processing of primary rRNA transcript to yield the immediate precursors to the large and small rRNAs (23S and 16S). Processes some mRNAs, and tRNAs when they are encoded in the rRNA operon. Processes pre-crRNA and tracrRNA of type II CRISPR loci if present in the organism. In Pseudomonas syringae pv. tomato (strain ATCC BAA-871 / DC3000), this protein is Ribonuclease 3.